The chain runs to 192 residues: Adenylate kinase (192 aa).

10–18 serves as a coordination point for ATP; sequence GVPGVGGTT.

Belongs to the archaeal adenylate kinase family. As to quaternary structure, monomer.

The protein resides in the cytoplasm. It carries out the reaction AMP + ATP = 2 ADP. In Methanococcus maripaludis (strain C6 / ATCC BAA-1332), this protein is Adenylate kinase.